A 436-amino-acid chain; its full sequence is Proline--tRNA ligase (436 aa).

The protein belongs to the class-II aminoacyl-tRNA synthetase family. ProS type 2 subfamily. Homodimer.

It is found in the cytoplasm. It carries out the reaction tRNA(Pro) + L-proline + ATP = L-prolyl-tRNA(Pro) + AMP + diphosphate. Functionally, catalyzes the attachment of proline to tRNA(Pro) in a two-step reaction: proline is first activated by ATP to form Pro-AMP and then transferred to the acceptor end of tRNA(Pro). The chain is Proline--tRNA ligase from Neorickettsia sennetsu (strain ATCC VR-367 / Miyayama) (Ehrlichia sennetsu).